The primary structure comprises 140 residues: Hexon-interlacing protein (140 aa).

Residues 100 to 127 adopt a coiled-coil conformation; it reads LTALLAQLDSLTRELNVVSQQLLDLRQQ. Serine 135 carries the phosphoserine; by host modification.

The protein belongs to the adenoviridae hexon-interlacing protein family. Homotrimer. Interacts with hexon protein; this interaction tethers the hexons together. Self-interacts with adjacent proteins. Interacts with kinesin light chain KLC1; this interaction leads to capsid disruption at the nuclear pore complex during virus entry into host cell.

The protein localises to the virion. It localises to the host nucleus. Its function is as follows. Structural component of the virion that forms triskelion structures consisting of three molecules that stabilize three hexon trimers at the center of each icosahedral facet and fixes the peripentonal hexons. Dispensable for assembly. During virus entry, recruits the anterograde motor kinesin-1 to the capsid docked at the nuclear pore complex thereby subjecting the docked capsid to a pulling force. The resulting tension leads to capsid disruption, dispersion of capsid fragments toward cell periphery and eventually viral DNA entry into the host nucleus. In Human adenovirus C serotype 2 (HAdV-2), this protein is Hexon-interlacing protein.